The primary structure comprises 113 residues: Phosphorelay protein LuxU (113 aa).

The HPt domain maps to Gly-18–His-113. His-57 carries the post-translational modification Phosphohistidine.

Monomer.

Its function is as follows. Phosphorelay protein which receives sensory signals from a sensory kinase and transmit them to LuxO. At low cell density, a phosphoryl group is transferred from the sensory kinase, probably on His-57 and this phosphoryl group is further transferred to LuxO. The chain is Phosphorelay protein LuxU (luxU) from Vibrio cholerae serotype O1 (strain ATCC 39315 / El Tor Inaba N16961).